The primary structure comprises 1010 residues: 2-oxoglutarate dehydrogenase-like, mitochondrial (1010 aa).

A mitochondrion-targeting transit peptide spans 1–73; the sequence is MSQLRLLPSR…RSVHKSWDSF (73 aa). Residues H130, D143, and D145 each contribute to the Ca(2+) site. 5 residues coordinate thiamine diphosphate: R299, D398, N431, I433, and Q663. Residues D398, N431, and I433 each contribute to the Mg(2+) site.

This sequence belongs to the alpha-ketoglutarate dehydrogenase family. The OGDHC complex comprises multiple copies of three catalytic enzyme components, the 2-oxoglutarate dehydrogenase (OGDH/E1), the dihydrolipoamide dehydrogenase (DLST/E2) and the dihydrolipoamide dehydrogenase (DLD/E3). OGDHL/E1-like isoenzyme may replace OGDH in the OGDHC complex in the brain. The presence of either ODGH/E1 or ODGHL/E1-like isoenzyme in the complex may depend on its tissular distribution. Requires thiamine diphosphate as cofactor. Mg(2+) is required as a cofactor.

The protein localises to the mitochondrion matrix. It catalyses the reaction N(6)-[(R)-lipoyl]-L-lysyl-[protein] + 2-oxoglutarate + H(+) = N(6)-[(R)-S(8)-succinyldihydrolipoyl]-L-lysyl-[protein] + CO2. 2-oxoglutarate dehydrogenase (E1-like) component of the 2-oxoglutarate dehydrogenase multienzyme complex (OGDHC) which mediates the decarboxylation of alpha-ketoglutarate in the tricarboxylic acid cycle. The OGDHC complex catalyzes the overall conversion of 2-oxoglutarate to succinyl-CoA and CO(2) while reducing NAD(+) to NADH. The OGDHC complex is mainly active in the mitochondrion. Involved in the inhibition of cell proliferation and in apoptosis. The sequence is that of 2-oxoglutarate dehydrogenase-like, mitochondrial (OGDHL) from Pongo abelii (Sumatran orangutan).